Reading from the N-terminus, the 71-residue chain is UPF0352 protein Swoo_2786 (71 aa).

The protein belongs to the UPF0352 family.

The chain is UPF0352 protein Swoo_2786 from Shewanella woodyi (strain ATCC 51908 / MS32).